Consider the following 981-residue polypeptide: DNA ligase 4 (981 aa).

ATP-binding residues include E320, K322, R327, E380, F424, E484, K489, K506, and K508. K322 acts as the N6-AMP-lysine intermediate in catalysis. E380 is a Mg(2+) binding site. A Mg(2+)-binding site is contributed by E484. A disordered region spans residues 544–563 (SEKNNPSSYESGSDSDSDSE). BRCT domains are found at residues 721-819 (SKAD…PKYV) and 875-980 (ERLL…EYAA).

This sequence belongs to the ATP-dependent DNA ligase family. Mg(2+) serves as cofactor.

The protein resides in the nucleus. The enzyme catalyses ATP + (deoxyribonucleotide)n-3'-hydroxyl + 5'-phospho-(deoxyribonucleotide)m = (deoxyribonucleotide)n+m + AMP + diphosphate.. Functionally, DNA ligase involved in DNA non-homologous end joining (NHEJ); required for double-strand break (DSB) repair. The chain is DNA ligase 4 (LIG4) from Eremothecium gossypii (strain ATCC 10895 / CBS 109.51 / FGSC 9923 / NRRL Y-1056) (Yeast).